The sequence spans 236 residues: Phosphoribosylaminoimidazole-succinocarboxamide synthase (236 aa).

This sequence belongs to the SAICAR synthetase family.

The catalysed reaction is 5-amino-1-(5-phospho-D-ribosyl)imidazole-4-carboxylate + L-aspartate + ATP = (2S)-2-[5-amino-1-(5-phospho-beta-D-ribosyl)imidazole-4-carboxamido]succinate + ADP + phosphate + 2 H(+). It functions in the pathway purine metabolism; IMP biosynthesis via de novo pathway; 5-amino-1-(5-phospho-D-ribosyl)imidazole-4-carboxamide from 5-amino-1-(5-phospho-D-ribosyl)imidazole-4-carboxylate: step 1/2. The chain is Phosphoribosylaminoimidazole-succinocarboxamide synthase from Pseudomonas putida (strain ATCC 700007 / DSM 6899 / JCM 31910 / BCRC 17059 / LMG 24140 / F1).